Reading from the N-terminus, the 430-residue chain is Carbamoyl phosphate synthase small chain, chloroplastic (430 aa).

The N-terminal 35 residues, 1–35 (MAMATRTLGFVLPTSLSSQPSFDRRGGGFRVSVIR), are a transit peptide targeting the chloroplast. One can recognise a Glutamine amidotransferase type-1 domain in the interval 243 to 429 (KVIAYDFGIK…IELMKRSKQS (187 aa)). Residue cysteine 318 is the Nucleophile of the active site. Active-site residues include histidine 402 and glutamate 404.

This sequence belongs to the CarA family. In terms of assembly, heterodimer composed of 2 chains; the small (or glutamine) chain promotes the hydrolysis of glutamine to ammonia, which is used by the large (or ammonia) chain to synthesize carbamoyl phosphate.

The protein localises to the plastid. It is found in the chloroplast. It carries out the reaction hydrogencarbonate + L-glutamine + 2 ATP + H2O = carbamoyl phosphate + L-glutamate + 2 ADP + phosphate + 2 H(+). The catalysed reaction is L-glutamine + H2O = L-glutamate + NH4(+). It participates in amino-acid biosynthesis; L-arginine biosynthesis; carbamoyl phosphate from bicarbonate: step 1/1. The protein operates within pyrimidine metabolism; UMP biosynthesis via de novo pathway; (S)-dihydroorotate from bicarbonate: step 1/3. Small subunit of the arginine-specific carbamoyl phosphate synthase (CPSase). CPSase catalyzes the formation of carbamoyl phosphate from the ammonia moiety of glutamine, carbonate, and phosphate donated by ATP, the first step of the arginine biosynthetic pathway. The small subunit (glutamine amidotransferase) binds and cleaves glutamine to supply the large subunit with the substrate ammonia. This Arabidopsis thaliana (Mouse-ear cress) protein is Carbamoyl phosphate synthase small chain, chloroplastic (CARA).